The sequence spans 436 residues: Peptidase B (436 aa).

The Mn(2+) site is built by K201 and D206. Residue K213 is part of the active site. Mn(2+) contacts are provided by D224, D283, and E285. R287 is a catalytic residue.

This sequence belongs to the peptidase M17 family. In terms of assembly, homohexamer. Requires Mn(2+) as cofactor.

The protein localises to the cytoplasm. The enzyme catalyses Release of an N-terminal amino acid, Xaa, from a peptide or arylamide. Xaa is preferably Glu or Asp but may be other amino acids, including Leu, Met, His, Cys and Gln.. In terms of biological role, probably plays an important role in intracellular peptide degradation. In Pectobacterium atrosepticum (strain SCRI 1043 / ATCC BAA-672) (Erwinia carotovora subsp. atroseptica), this protein is Peptidase B.